The sequence spans 265 residues: Cell division protein FtsQ (265 aa).

Low complexity predominate over residues 1 to 13; that stretch reads MAGATTAKGGARR. The interval 1–25 is disordered; it reads MAGATTAKGGARRTPPPGPPPPALK. Residues 1–35 are Cytoplasmic-facing; sequence MAGATTAKGGARRTPPPGPPPPALKARRRLRLPRR. A compositionally biased stretch (pro residues) spans 14–23; the sequence is TPPPGPPPPA. A helical membrane pass occupies residues 36–58; that stretch reads RTLLVTGVATALLGSGVTWLLYG. Topologically, residues 59-265 are extracellular; the sequence is SSWLRVEQVA…APTAPAVTHS (207 aa). Residues 62-131 form the POTRA domain; that stretch reads LRVEQVAVSG…DTIAVRVTER (70 aa).

The protein belongs to the FtsQ/DivIB family. FtsQ subfamily.

It localises to the cell membrane. Functionally, essential cell division protein. The chain is Cell division protein FtsQ from Streptomyces bingchenggensis (strain BCW-1).